The primary structure comprises 88 residues: Elongation factor 1-beta (88 aa).

This sequence belongs to the EF-1-beta/EF-1-delta family.

Promotes the exchange of GDP for GTP in EF-1-alpha/GDP, thus allowing the regeneration of EF-1-alpha/GTP that could then be used to form the ternary complex EF-1-alpha/GTP/AAtRNA. This chain is Elongation factor 1-beta (ef1b), found in Thermoplasma acidophilum (strain ATCC 25905 / DSM 1728 / JCM 9062 / NBRC 15155 / AMRC-C165).